The chain runs to 247 residues: Small ribosomal subunit protein uS2 (247 aa).

Belongs to the universal ribosomal protein uS2 family.

The protein is Small ribosomal subunit protein uS2 of Ralstonia nicotianae (strain ATCC BAA-1114 / GMI1000) (Ralstonia solanacearum).